A 459-amino-acid polypeptide reads, in one-letter code: Aluminum-activated malate transporter 1 (459 aa).

At 1-52 (MDIDHGRESDGEMVGTIASCGLLLHSLLAGLGRRAAGFARKVGGAAREDPRR) the chain is on the extracellular side. Helical transmembrane passes span 53–73 (VAHS…YFVT) and 74–94 (PLFN…VVVM). Residues 95–108 (EYTVGATLSKGLNR) are Extracellular-facing. The chain crosses the membrane as a helical span at residues 109 to 129 (ALATLVAGCIAVGAHQLAELA). Over 130–137 (ERCGDQGE) the chain is Cytoplasmic. The helical transmembrane segment at 138-158 (PIVLTVLVFFVASAATFLRFI) threads the bilayer. The Extracellular segment spans residues 159–160 (PE). Residues 161–181 (IKAKYDYGVTIFILTFGLVAV) form a helical membrane-spanning segment. Residues 182–199 (SSYRVEELIQLAHQRFYT) are Cytoplasmic-facing. The helical transmembrane segment at 200–220 (IAVGVFICLCTTVFLFPVWAG) threads the bilayer. Topologically, residues 221–459 (EDVHKLASGN…DEPLPDVVIL (239 aa)) are extracellular.

Belongs to the aromatic acid exporter (TC 2.A.85) family. Detected in root tips.

It is found in the cell membrane. With respect to regulation, activated by external aluminum. The enhancement of malate transport is not due to alteration in the selectivity properties but is due to an increased anion permeability. Malate transporter critical for aluminum tolerance. Permeable to chloride, nitrate, sulfate and malate. The chain is Aluminum-activated malate transporter 1 (ALMT1) from Triticum aestivum (Wheat).